An 85-amino-acid chain; its full sequence is Prosialokinin (85 aa).

The first 23 residues, 1-23 (MNMFITVQIVIVLVLAVLSEAAS), serve as a signal peptide directing secretion. The propeptide occupies 24–74 (LPTATERKDAMDEGPNQSDEPEGSVADPSTKDDDYSDSLKQDEKYYKVRLL). Residues 26–61 (TATERKDAMDEGPNQSDEPEGSVADPSTKDDDYSDS) are disordered. The segment covering 52-61 (STKDDDYSDS) has biased composition (basic and acidic residues). The residue at position 84 (Met-84) is a Methionine amide.

This sequence belongs to the tachykinin family. As to expression, expressed exclusively in the medial lobe of female salivary gland. Not detected in female carcass without head and salivary glands. Not detected in male tissues.

The protein resides in the secreted. Vasodilatory peptide. Facilitates mosquito blood feeding on vertebrate host. Induces nitric oxide (NO) release in blood vessels through the activation of the nitric oxide synthase (NOS3). Enhances endothelial permeability and induces edema at the site of inoculation in the host. Induces host smooth muscle contraction. Down-regulates production of Th1 cytokines, such as IL2 and IFN-gamma (IFNG), in mouse splenocytes. Up-regulates production of Th2 cytokines, such as IL4 and IL10, in mouse splenocytes. Promotes recruitment of host leukocytes, especially neutrophils and CD8+ T cells, to the bite site. Modulates cytokine production by host macrophages. Modulates populations of monocytes/macrophages, plasmacytoid dendritic cells, B cells, CD4+ T cells, NK and NKT cells, shifting mammalian immunity towards Th2 responses. Its function is as follows. (Microbial infection) Promotes Semliki Forest virus infection in the host. Functionally, (Microbial infection) Does not affect Zika virus replication in the host. The chain is Prosialokinin from Aedes aegypti (Yellowfever mosquito).